We begin with the raw amino-acid sequence, 899 residues long: Solute carrier family 12 member 9 (899 aa).

Residues Met-1–Lys-44 lie on the Cytoplasmic side of the membrane. A helical membrane pass occupies residues Leu-45 to Phe-65. The Extracellular portion of the chain corresponds to Met-66 to Ser-80. A helical transmembrane segment spans residues Leu-81–Ile-101. Topologically, residues Ser-102–Ser-127 are cytoplasmic. The chain crosses the membrane as a helical span at residues Ile-128 to Val-148. At Glu-149 to Ser-176 the chain is on the extracellular side. Residues Phe-177–Ile-197 form a helical membrane-spanning segment. Over Tyr-198–Ser-202 the chain is Cytoplasmic. A helical transmembrane segment spans residues Phe-203 to Val-223. Topologically, residues Arg-224–Asn-266 are extracellular. N-linked (GlcNAc...) asparagine glycosylation is found at Asn-235 and Asn-246. Residues Leu-267–Gly-287 traverse the membrane as a helical segment. Residues Cys-288–Gly-304 lie on the Cytoplasmic side of the membrane. Residues Thr-305 to Phe-325 traverse the membrane as a helical segment. Residues Thr-326–Pro-347 are Extracellular-facing. The chain crosses the membrane as a helical span at residues Phe-348–Ala-368. The Cytoplasmic portion of the chain corresponds to Ser-369–Lys-393. A helical transmembrane segment spans residues Gly-394–Ala-414. The Extracellular portion of the chain corresponds to Gly-415–Thr-419. The helical transmembrane segment at Ile-420–Leu-440 threads the bilayer. Over Ala-441–Ser-469 the chain is Cytoplasmic. Residues Leu-470 to Leu-490 traverse the membrane as a helical segment. Over Leu-491–Ser-739 the chain is Extracellular. Residues Ala-740–Ala-760 form a helical membrane-spanning segment. Residues Ser-761–Leu-899 lie on the Cytoplasmic side of the membrane.

The protein belongs to the SLC12A transporter family.

It localises to the cell membrane. The protein localises to the lysosome membrane. Seems to correspond to a subunit of a multimeric transport system and thus, additional subunits may be required for its function. May play a role in lysosomal ion flux and osmoregulation. This Xenopus laevis (African clawed frog) protein is Solute carrier family 12 member 9 (slc12a9).